The sequence spans 595 residues: Transketolase-like protein 1 (595 aa).

93 to 95 (GWP) is a thiamine diphosphate binding site. Mg(2+) is bound by residues aspartate 125, asparagine 155, and isoleucine 157. Asparagine 155 is a thiamine diphosphate binding site. Thiamine diphosphate is bound by residues lysine 217, glutamate 339, and phenylalanine 365. Residue glutamate 339 is the Proton donor of the active site. 2 residues coordinate substrate: histidine 389 and aspartate 397. Histidine 401 serves as a coordination point for thiamine diphosphate.

Belongs to the transketolase family. Homodimer. Mg(2+) is required as a cofactor. Requires Ca(2+) as cofactor. Mn(2+) serves as cofactor. The cofactor is Co(2+). It depends on thiamine diphosphate as a cofactor. In terms of tissue distribution, not expressed in the embryonic neocortex.

The protein resides in the cytoplasm. The catalysed reaction is D-sedoheptulose 7-phosphate + D-glyceraldehyde 3-phosphate = aldehydo-D-ribose 5-phosphate + D-xylulose 5-phosphate. Catalyzes the transfer of a two-carbon ketol group from a ketose donor to an aldose acceptor, via a covalent intermediate with the cofactor thiamine pyrophosphate. This Mus musculus (Mouse) protein is Transketolase-like protein 1.